Here is a 471-residue protein sequence, read N- to C-terminus: Putative multidrug resistance protein MdtD (471 aa).

The Periplasmic segment spans residues methionine 1–glutamine 11. A helical membrane pass occupies residues leucine 12–alanine 32. The Cytoplasmic segment spans residues leucine 33–histidine 48. A helical transmembrane segment spans residues methionine 49–alanine 69. Over aspartate 70–asparagine 76 the chain is Periplasmic. The helical transmembrane segment at isoleucine 77 to threonine 97 threads the bilayer. Residues leucine 98 to leucine 101 lie on the Cytoplasmic side of the membrane. Residues leucine 102–methionine 124 traverse the membrane as a helical segment. At lysine 125 to threonine 137 the chain is on the periplasmic side. A helical transmembrane segment spans residues phenylalanine 138–valine 158. Topologically, residues glutamate 159–histidine 164 are cytoplasmic. Residues tryptophan 165–methionine 185 traverse the membrane as a helical segment. Over proline 186–aspartate 196 the chain is Periplasmic. The helical transmembrane segment at leucine 197–serine 217 threads the bilayer. At lysine 218–proline 224 the chain is on the cytoplasmic side. The helical transmembrane segment at leucine 225–alanine 245 threads the bilayer. Topologically, residues arginine 246–threonine 262 are periplasmic. A helical transmembrane segment spans residues phenylalanine 263–methionine 283. The Cytoplasmic segment spans residues threonine 284–proline 285. The helical transmembrane segment at valine 286–methionine 306 threads the bilayer. Residues valine 307–threonine 341 lie on the Periplasmic side of the membrane. A helical transmembrane segment spans residues leucine 342–leucine 362. Residues glutamine 363–serine 395 are Cytoplasmic-facing. A helical transmembrane segment spans residues methionine 396–phenylalanine 416. The Periplasmic portion of the chain corresponds to glycine 417–threonine 430. Residues valine 431 to alanine 451 form a helical membrane-spanning segment. The Cytoplasmic segment spans residues arginine 452–glutamine 471.

It belongs to the major facilitator superfamily. TCR/Tet family.

It localises to the cell inner membrane. The protein is Putative multidrug resistance protein MdtD of Escherichia coli (strain SE11).